The following is a 627-amino-acid chain: Putative polyketide hydroxylase (627 aa).

FAD contacts are provided by residues 22 to 51 (PVLVVGGSLVGLSTSVFLGRLGVRHTLVER) and 309 to 319 (YRSGRVLLAGD). Residues 370–469 (AEATSARAAH…GGGPGGGGPQ (100 aa)) form a disordered region. The span at 395 to 469 (AGGGGPGAGT…GGGPGGGGPQ (75 aa)) shows a compositional bias: gly residues.

The protein belongs to the PheA/TfdB FAD monooxygenase family. The cofactor is FAD.

Involved in developmentally regulated synthesis of a compound biosynthetically related to polyketide antibiotics which is essential for spore color in Streptococcus coelicolor. In Streptomyces coelicolor (strain ATCC BAA-471 / A3(2) / M145), this protein is Putative polyketide hydroxylase.